The chain runs to 307 residues: Thymidylate synthase (307 aa).

R44 is a dUMP binding site. S108 is modified (phosphoserine). Residues 169–170 (RR), 189–190 (CH), 209–212 (RSGD), N220, and 250–252 (HIY) each bind dUMP. Residue C189 is the Nucleophile of the active site. D212 lines the (6R)-5,10-methylene-5,6,7,8-tetrahydrofolate pocket. Glycyl lysine isopeptide (Lys-Gly) (interchain with G-Cter in SUMO2) cross-links involve residues K286 and K302. A306 is a (6R)-5,10-methylene-5,6,7,8-tetrahydrofolate binding site.

This sequence belongs to the thymidylate synthase family. As to quaternary structure, homodimer.

It is found in the nucleus. The protein localises to the cytoplasm. Its subcellular location is the mitochondrion. It localises to the mitochondrion matrix. The protein resides in the mitochondrion inner membrane. It catalyses the reaction dUMP + (6R)-5,10-methylene-5,6,7,8-tetrahydrofolate = 7,8-dihydrofolate + dTMP. Its pathway is pyrimidine metabolism; dTTP biosynthesis. Catalyzes the reductive methylation of 2'-deoxyuridine 5'-monophosphate (dUMP) to thymidine 5'-monophosphate (dTMP), using the cosubstrate, 5,10- methylenetetrahydrofolate (CH2H4folate) as a 1-carbon donor and reductant and contributes to the de novo mitochondrial thymidylate biosynthesis pathway. The protein is Thymidylate synthase (Tyms) of Mus musculus (Mouse).